Here is a 217-residue protein sequence, read N- to C-terminus: MKLIAVLLLVVLATATTATAADADALQDLCVADYASVILVNGFACKPASNVTAEDFFSNLLVKQGATNNTFGSLVTGANVQRIPGLNTLGVSMARIDYAPGGLNPPHTHPRATEMVFVLEGQLDVGFITTTNQLIAKTIAKGETFVFPKGLVHFQKNNGWEPATVIAGFNSQLPGTVNIPLTLFNATPPVPDNVLTKAFQIGTKEVQKIKSKFAPKK.

The signal sequence occupies residues 1 to 20; sequence MKLIAVLLLVVLATATTATA. Cysteine 30 and cysteine 45 are oxidised to a cystine. 2 N-linked (GlcNAc...) asparagine glycosylation sites follow: asparagine 50 and asparagine 68. Residues 58–207 enclose the Cupin type-1 domain; it reads SNLLVKQGAT…AFQIGTKEVQ (150 aa). The Mn(2+) site is built by histidine 107, histidine 109, glutamate 114, and histidine 153.

Belongs to the germin family. In terms of processing, glycosylated.

It is found in the secreted. The protein localises to the extracellular space. Its subcellular location is the apoplast. It localises to the cell wall. Putative receptor for bacterial rhicadhesin, an attachment protein of rhizobiaceae. In Pisum sativum (Garden pea), this protein is Rhicadhesin receptor (GER1).